Consider the following 339-residue polypeptide: Glyceraldehyde-3-phosphate dehydrogenase (339 aa).

NAD(+) contacts are provided by residues 11–12 (TI) and G110. A D-glyceraldehyde 3-phosphate-binding site is contributed by 139–141 (SCN). The active-site Nucleophile is the C140. Residue R168 coordinates NAD(+). 194 to 195 (HG) is a D-glyceraldehyde 3-phosphate binding site. Residue Q301 coordinates NAD(+).

Belongs to the glyceraldehyde-3-phosphate dehydrogenase family. In terms of assembly, homotetramer.

Its subcellular location is the cytoplasm. It catalyses the reaction D-glyceraldehyde 3-phosphate + phosphate + NADP(+) = (2R)-3-phospho-glyceroyl phosphate + NADPH + H(+). The enzyme catalyses D-glyceraldehyde 3-phosphate + phosphate + NAD(+) = (2R)-3-phospho-glyceroyl phosphate + NADH + H(+). Its pathway is carbohydrate degradation; glycolysis; pyruvate from D-glyceraldehyde 3-phosphate: step 1/5. This Methanospirillum hungatei JF-1 (strain ATCC 27890 / DSM 864 / NBRC 100397 / JF-1) protein is Glyceraldehyde-3-phosphate dehydrogenase.